A 314-amino-acid polypeptide reads, in one-letter code: tRNA dimethylallyltransferase (314 aa).

11–18 (GPTAVGKT) lines the ATP pocket. 13 to 18 (TAVGKT) provides a ligand contact to substrate. The interaction with substrate tRNA stretch occupies residues 36–39 (DSMQ).

Belongs to the IPP transferase family. Monomer. It depends on Mg(2+) as a cofactor.

The catalysed reaction is adenosine(37) in tRNA + dimethylallyl diphosphate = N(6)-dimethylallyladenosine(37) in tRNA + diphosphate. In terms of biological role, catalyzes the transfer of a dimethylallyl group onto the adenine at position 37 in tRNAs that read codons beginning with uridine, leading to the formation of N6-(dimethylallyl)adenosine (i(6)A). The protein is tRNA dimethylallyltransferase of Bacillus anthracis.